We begin with the raw amino-acid sequence, 458 residues long: MSSGRIVQIIGAVIDVEFPRDLVPNVYDALKVQGAETTLEVQQQLGDGIVRTIAMGSTEGLKRGLDVVNTGTGISVPVGKQTLGRIMDVLGNPIDEAGPIGEEERWTIHRAAPSYSEQAGGNELLETGIKVIDLVCPFAKGGKVGLFGGAGVGKTVNMMELIRNIAMEHSGYSVFAGVGERTREGNDFYHEMKDSNVLDKVALVYGQMNEPPGNRLRVALTGLTMAEKFRDEGRDVLLFVDNIYRYTLAGTEVSALLGRMPSAVGYQPTLAEEMGVLQERITSTKNGSITSVQAVYVPADDLTDPSPATTFAHLDATVVLSRDIASLGIYPAVDPLDSTSRQLDPLVIGQEHYDTARGVQYVLQRYKELKDIIAILGMDELSEQDKQLVSRARKIQRFLSQPFFVAEVFTGSPGKYVPLKETIRGFSGILNGDYDHLPEQAFYMVGSIDEAIEKAKKL.

Position 148-155 (148-155) interacts with ATP; sequence GGAGVGKT.

It belongs to the ATPase alpha/beta chains family. In terms of assembly, F-type ATPases have 2 components, CF(1) - the catalytic core - and CF(0) - the membrane proton channel. CF(1) has five subunits: alpha(3), beta(3), gamma(1), delta(1), epsilon(1). CF(0) has three main subunits: a(1), b(2) and c(9-12). The alpha and beta chains form an alternating ring which encloses part of the gamma chain. CF(1) is attached to CF(0) by a central stalk formed by the gamma and epsilon chains, while a peripheral stalk is formed by the delta and b chains.

The protein localises to the cell inner membrane. It catalyses the reaction ATP + H2O + 4 H(+)(in) = ADP + phosphate + 5 H(+)(out). Functionally, produces ATP from ADP in the presence of a proton gradient across the membrane. The catalytic sites are hosted primarily by the beta subunits. This chain is ATP synthase subunit beta, found in Stutzerimonas stutzeri (strain A1501) (Pseudomonas stutzeri).